The primary structure comprises 309 residues: Small ribosomal subunit protein uS7m (309 aa).

The disordered stretch occupies residues 39–86; it reads DSTTSSRLPPRVQIQQQQQQRTQPYSTETTPPPNSNNGDLAGIEGQPP. Over residues 51 to 61 the composition is skewed to low complexity; it reads QIQQQQQQRTQ.

Belongs to the universal ribosomal protein uS7 family. Component of the mitochondrial small ribosomal subunit (mt-SSU). Mature N.crassa 74S mitochondrial ribosomes consist of a small (37S) and a large (54S) subunit. The 37S small subunit contains a 16S ribosomal RNA (16S mt-rRNA) and 32 different proteins. The 54S large subunit contains a 23S rRNA (23S mt-rRNA) and 42 different proteins.

The protein localises to the mitochondrion. Component of the mitochondrial ribosome (mitoribosome), a dedicated translation machinery responsible for the synthesis of mitochondrial genome-encoded proteins, including at least some of the essential transmembrane subunits of the mitochondrial respiratory chain. The mitoribosomes are attached to the mitochondrial inner membrane and translation products are cotranslationally integrated into the membrane. The polypeptide is Small ribosomal subunit protein uS7m (rsm7) (Neurospora crassa (strain ATCC 24698 / 74-OR23-1A / CBS 708.71 / DSM 1257 / FGSC 987)).